The chain runs to 219 residues: Probable GTP-binding protein EngB (219 aa).

The 178-residue stretch at 42-219 (SVPEIAFAGR…RTAVLEAVEL (178 aa)) folds into the EngB-type G domain. Residues 50 to 57 (GRSNVGKS), 77 to 81 (GRTQE), 97 to 100 (DMPG), 164 to 167 (TKAD), and 198 to 200 (TSS) contribute to the GTP site. Mg(2+)-binding residues include serine 57 and threonine 79.

Belongs to the TRAFAC class TrmE-Era-EngA-EngB-Septin-like GTPase superfamily. EngB GTPase family. Requires Mg(2+) as cofactor.

Functionally, necessary for normal cell division and for the maintenance of normal septation. The polypeptide is Probable GTP-binding protein EngB (Sphingopyxis alaskensis (strain DSM 13593 / LMG 18877 / RB2256) (Sphingomonas alaskensis)).